A 1212-amino-acid polypeptide reads, in one-letter code: Dermatan-sulfate epimerase-like protein (1212 aa).

The first 20 residues, 1-20 (MALMFTGHLLFLALLMFAFS), serve as a signal peptide directing secretion. Residues N28, N666, N688, and N709 are each glycosylated (N-linked (GlcNAc...) asparagine). Helical transmembrane passes span 764 to 784 (IIFP…CISL) and 803 to 823 (WILI…WSTC). N874 is a glycosylation site (N-linked (GlcNAc...) asparagine).

This sequence belongs to the dermatan-sulfate isomerase family. Expressed in different brain areas as well as in multiple other peripheral tissues.

Its subcellular location is the membrane. The polypeptide is Dermatan-sulfate epimerase-like protein (DSEL) (Homo sapiens (Human)).